We begin with the raw amino-acid sequence, 228 residues long: DNA-binding response regulator MtrA (228 aa).

The region spanning 7 to 120 (RILVVDDDPS…ELVARVRARL (114 aa)) is the Response regulatory domain. Residue Asp56 is modified to 4-aspartylphosphate. The segment at residues 128–227 (AEMLSIGDVE…VRGVGYKAGP (100 aa)) is a DNA-binding region (ompR/PhoB-type).

In terms of assembly, probably a monomer when inactive, phosphorylation may permit it to oligomerize. The monomeric form does not seem to be phosphorylated. Phosphorylated by MtrB.

The protein resides in the cytoplasm. Member of the two-component regulatory system MtrA/MtrB, responding to environmental signals. Controls expression of a number of genes including dnaA, ripA, fbpB and probably itself. Probably plays a role in cell division. The protein is DNA-binding response regulator MtrA (mtrA) of Mycolicibacterium smegmatis (strain ATCC 700084 / mc(2)155) (Mycobacterium smegmatis).